A 335-amino-acid chain; its full sequence is Glycerol-3-phosphate dehydrogenase [NAD(P)+] (335 aa).

NADPH is bound by residues Ser12, Trp13, and Lys107. 3 residues coordinate sn-glycerol 3-phosphate: Lys107, Gly138, and Ser140. Ala142 lines the NADPH pocket. Residues Lys193, Asp246, Ser256, Arg257, and Asn258 each coordinate sn-glycerol 3-phosphate. Lys193 functions as the Proton acceptor in the catalytic mechanism. Arg257 serves as a coordination point for NADPH. Residues Val281 and Glu283 each contribute to the NADPH site.

Belongs to the NAD-dependent glycerol-3-phosphate dehydrogenase family.

It localises to the cytoplasm. The enzyme catalyses sn-glycerol 3-phosphate + NAD(+) = dihydroxyacetone phosphate + NADH + H(+). The catalysed reaction is sn-glycerol 3-phosphate + NADP(+) = dihydroxyacetone phosphate + NADPH + H(+). The protein operates within membrane lipid metabolism; glycerophospholipid metabolism. In terms of biological role, catalyzes the reduction of the glycolytic intermediate dihydroxyacetone phosphate (DHAP) to sn-glycerol 3-phosphate (G3P), the key precursor for phospholipid synthesis. In Geobacter sp. (strain M21), this protein is Glycerol-3-phosphate dehydrogenase [NAD(P)+].